Here is a 729-residue protein sequence, read N- to C-terminus: MLYKGDTLYLDWLEDGIAELVFDAPGSVNKLDTATVASLGQALEVLEKQHDLKGLLLRSNKAAFIVGADITEFLSLFLVPEEQLSQWLHFANSVFNRLEDLPVPTLAAVNGYALGGGCECVLATDYRLATPDLRIGLPETKLGIMPGFGGSVRLPRMLGADSALEIIAAGKDVGAEHALKIGLVDGVVKQEKLIEGAIAVLRQAITGDLDWRAKRQPKLEPLKLSKIEAAMSFTIAKGMVAQTAGKHYPAPMTAVKTIEAAARFGREEALNLENKSFVPLAHTNEARALVGIFLNDQYVKGKAKKLTKDIETPKQAAVLGAGIMGGGIAYQSAWKGVPVIMKDINDKSLNLGMTEAAKLLNKQLERGKIDGLKLAGVISTIHPTLDYAGFDRVDVVVEAVVENPKVKKAVLAETEQKVRPETVLASNTSTIPIGELASALERPENFCGMHFFNPVHRMPLVEIIRGEKSSDETIAKVVAWASKMGKTPIVVNDCPGFFVNRVLFPYFAGFSQLLRDGADFRKVDKVMEKQFGWPMGPAYLLDVVGIDTAHHAQAVMAAGFPQRMQKEYRDAIDALFDASRFGQKNGLGFWRYKEDSKGKPKKEEDAAVDDLLASVSQTKRDFSDDEIIARMMIPMINEVVRCLEEGIIASPAEADMALVYGLGFPPFHGGAFRWLDTQGSAKYLDMAQQYQHLGPLYEVPEGLRNKARHNEPYYPPVEPARPVGSLKTA.

Residues 1–189 (MLYKGDTLYL…KIGLVDGVVK (189 aa)) form an enoyl-CoA hydratase/isomerase region. Asp296 provides a ligand contact to substrate. Residues 311-729 (ETPKQAAVLG…ARPVGSLKTA (419 aa)) are 3-hydroxyacyl-CoA dehydrogenase. Residues Met324, Asp343, 400 to 402 (VVE), Lys407, and Ser429 each bind NAD(+). His450 acts as the For 3-hydroxyacyl-CoA dehydrogenase activity in catalysis. Asn453 provides a ligand contact to NAD(+). Asn500 and Tyr660 together coordinate substrate. The tract at residues 708–729 (RHNEPYYPPVEPARPVGSLKTA) is disordered.

This sequence in the N-terminal section; belongs to the enoyl-CoA hydratase/isomerase family. It in the C-terminal section; belongs to the 3-hydroxyacyl-CoA dehydrogenase family. As to quaternary structure, heterotetramer of two alpha chains (FadB) and two beta chains (FadA).

The enzyme catalyses a (3S)-3-hydroxyacyl-CoA + NAD(+) = a 3-oxoacyl-CoA + NADH + H(+). It carries out the reaction a (3S)-3-hydroxyacyl-CoA = a (2E)-enoyl-CoA + H2O. The catalysed reaction is a 4-saturated-(3S)-3-hydroxyacyl-CoA = a (3E)-enoyl-CoA + H2O. It catalyses the reaction (3S)-3-hydroxybutanoyl-CoA = (3R)-3-hydroxybutanoyl-CoA. The enzyme catalyses a (3Z)-enoyl-CoA = a 4-saturated (2E)-enoyl-CoA. It carries out the reaction a (3E)-enoyl-CoA = a 4-saturated (2E)-enoyl-CoA. It participates in lipid metabolism; fatty acid beta-oxidation. In terms of biological role, involved in the aerobic and anaerobic degradation of long-chain fatty acids via beta-oxidation cycle. Catalyzes the formation of 3-oxoacyl-CoA from enoyl-CoA via L-3-hydroxyacyl-CoA. It can also use D-3-hydroxyacyl-CoA and cis-3-enoyl-CoA as substrate. The protein is Fatty acid oxidation complex subunit alpha of Salmonella gallinarum (strain 287/91 / NCTC 13346).